Reading from the N-terminus, the 385-residue chain is 4-hydroxy-3-methylbut-2-en-1-yl diphosphate synthase (flavodoxin) (385 aa).

Cysteine 280, cysteine 283, cysteine 315, and glutamate 322 together coordinate [4Fe-4S] cluster.

This sequence belongs to the IspG family. Requires [4Fe-4S] cluster as cofactor.

The catalysed reaction is (2E)-4-hydroxy-3-methylbut-2-enyl diphosphate + oxidized [flavodoxin] + H2O + 2 H(+) = 2-C-methyl-D-erythritol 2,4-cyclic diphosphate + reduced [flavodoxin]. It functions in the pathway isoprenoid biosynthesis; isopentenyl diphosphate biosynthesis via DXP pathway; isopentenyl diphosphate from 1-deoxy-D-xylulose 5-phosphate: step 5/6. Converts 2C-methyl-D-erythritol 2,4-cyclodiphosphate (ME-2,4cPP) into 1-hydroxy-2-methyl-2-(E)-butenyl 4-diphosphate. The polypeptide is 4-hydroxy-3-methylbut-2-en-1-yl diphosphate synthase (flavodoxin) (Streptomyces griseus subsp. griseus (strain JCM 4626 / CBS 651.72 / NBRC 13350 / KCC S-0626 / ISP 5235)).